The chain runs to 541 residues: Anthranilate synthase component 1 (541 aa).

L-tryptophan-binding positions include S61 and 311–313 (PYM). 348-349 (GT) is a binding site for chorismate. E381 is a binding site for Mg(2+). Chorismate-binding positions include Y469, R489, 503 to 505 (GAG), and G505. A Mg(2+)-binding site is contributed by E518.

The protein belongs to the anthranilate synthase component I family. Heterotetramer consisting of two non-identical subunits: a beta subunit (TrpG) and a large alpha subunit (TrpE). The cofactor is Mg(2+).

It catalyses the reaction chorismate + L-glutamine = anthranilate + pyruvate + L-glutamate + H(+). The protein operates within amino-acid biosynthesis; L-tryptophan biosynthesis; L-tryptophan from chorismate: step 1/5. Feedback inhibited by tryptophan. In terms of biological role, part of a heterotetrameric complex that catalyzes the two-step biosynthesis of anthranilate, an intermediate in the biosynthesis of L-tryptophan. In the first step, the glutamine-binding beta subunit (TrpG) of anthranilate synthase (AS) provides the glutamine amidotransferase activity which generates ammonia as a substrate that, along with chorismate, is used in the second step, catalyzed by the large alpha subunit of AS (TrpE) to produce anthranilate. In the absence of TrpG, TrpE can synthesize anthranilate directly from chorismate and high concentrations of ammonia. This is Anthranilate synthase component 1 (trpE) from Vibrio parahaemolyticus serotype O3:K6 (strain RIMD 2210633).